Reading from the N-terminus, the 247-residue chain is ATP synthase subunit a, chloroplastic (247 aa).

Helical transmembrane passes span 38–58 (QVLI…VIAV), 95–115 (VPFI…GALL), 134–154 (INTT…AGLS), 199–219 (LVVV…VMFL), and 220–240 (GLFT…AYIG).

Belongs to the ATPase A chain family. F-type ATPases have 2 components, CF(1) - the catalytic core - and CF(0) - the membrane proton channel. CF(1) has five subunits: alpha(3), beta(3), gamma(1), delta(1), epsilon(1). CF(0) has four main subunits: a, b, b' and c.

It is found in the plastid. The protein localises to the chloroplast thylakoid membrane. Key component of the proton channel; it plays a direct role in the translocation of protons across the membrane. This is ATP synthase subunit a, chloroplastic from Hordeum vulgare (Barley).